The following is a 106-amino-acid chain: UPF0091 protein RC0354 (106 aa).

The protein belongs to the UPF0091 family.

This Rickettsia conorii (strain ATCC VR-613 / Malish 7) protein is UPF0091 protein RC0354.